A 460-amino-acid polypeptide reads, in one-letter code: V-type ATP synthase beta chain (460 aa).

The protein belongs to the ATPase alpha/beta chains family.

Functionally, produces ATP from ADP in the presence of a proton gradient across the membrane. The V-type beta chain is a regulatory subunit. This is V-type ATP synthase beta chain from Anaeromyxobacter sp. (strain Fw109-5).